The chain runs to 450 residues: Putative nucleolar protein 5-3 (450 aa).

One can recognise a Nop domain in the interval 252 to 370; the sequence is IAPNLTALVG…LEARLRNLEG (119 aa). The segment at 375 to 423 is disordered; sequence ACEEEEEVNDKDTKKEADDEEEPKTEECSKKRKKEAELETVEDPAKKSK. The span at 399–423 shows a compositional bias: basic and acidic residues; that stretch reads TEECSKKRKKEAELETVEDPAKKSK.

This sequence belongs to the NOP5/NOP56 family.

It is found in the nucleus. It localises to the nucleolus. Required for 60S ribosomal subunit biogenesis. The polypeptide is Putative nucleolar protein 5-3 (NOP5-3) (Arabidopsis thaliana (Mouse-ear cress)).